A 181-amino-acid chain; its full sequence is Transcription termination/antitermination protein NusG (181 aa).

One can recognise a KOW domain in the interval 130 to 158 (PGETVRVNDGPFSDFNGIVEEVDYEKNRL).

The protein belongs to the NusG family. Monomer. Interacts with the transcription termination factor Rho and with RNA polymerase.

Participates in transcription elongation, termination and antitermination. In the absence of Rho, increases the rate of transcription elongation by the RNA polymerase (RNAP), probably by partially suppressing pausing. In the presence of Rho, modulates most Rho-dependent termination events by interacting with the RNAP to render the complex more susceptible to the termination activity of Rho. May be required to overcome a kinetic limitation of Rho to function at certain terminators. Also involved in ribosomal RNA transcriptional antitermination. This chain is Transcription termination/antitermination protein NusG, found in Buchnera aphidicola subsp. Baizongia pistaciae (strain Bp).